A 166-amino-acid polypeptide reads, in one-letter code: Crossover junction endodeoxyribonuclease RuvC (166 aa).

Active-site residues include Asp-11, Glu-70, and Asp-142. 3 residues coordinate Mg(2+): Asp-11, Glu-70, and Asp-142.

The protein belongs to the RuvC family. Homodimer which binds Holliday junction (HJ) DNA. The HJ becomes 2-fold symmetrical on binding to RuvC with unstacked arms; it has a different conformation from HJ DNA in complex with RuvA. In the full resolvosome a probable DNA-RuvA(4)-RuvB(12)-RuvC(2) complex forms which resolves the HJ. Requires Mg(2+) as cofactor.

Its subcellular location is the cytoplasm. The catalysed reaction is Endonucleolytic cleavage at a junction such as a reciprocal single-stranded crossover between two homologous DNA duplexes (Holliday junction).. The RuvA-RuvB-RuvC complex processes Holliday junction (HJ) DNA during genetic recombination and DNA repair. Endonuclease that resolves HJ intermediates. Cleaves cruciform DNA by making single-stranded nicks across the HJ at symmetrical positions within the homologous arms, yielding a 5'-phosphate and a 3'-hydroxyl group; requires a central core of homology in the junction. The consensus cleavage sequence is 5'-(A/T)TT(C/G)-3'. Cleavage occurs on the 3'-side of the TT dinucleotide at the point of strand exchange. HJ branch migration catalyzed by RuvA-RuvB allows RuvC to scan DNA until it finds its consensus sequence, where it cleaves and resolves the cruciform DNA. This chain is Crossover junction endodeoxyribonuclease RuvC, found in Nitratidesulfovibrio vulgaris (strain DP4) (Desulfovibrio vulgaris).